Here is a 511-residue protein sequence, read N- to C-terminus: Bifunctional purine biosynthesis protein PurH (511 aa).

The MGS-like domain maps to 1 to 145 (MKKRALVSVS…KNHQFVSVIV (145 aa)).

This sequence belongs to the PurH family.

The enzyme catalyses (6R)-10-formyltetrahydrofolate + 5-amino-1-(5-phospho-beta-D-ribosyl)imidazole-4-carboxamide = 5-formamido-1-(5-phospho-D-ribosyl)imidazole-4-carboxamide + (6S)-5,6,7,8-tetrahydrofolate. The catalysed reaction is IMP + H2O = 5-formamido-1-(5-phospho-D-ribosyl)imidazole-4-carboxamide. It functions in the pathway purine metabolism; IMP biosynthesis via de novo pathway; 5-formamido-1-(5-phospho-D-ribosyl)imidazole-4-carboxamide from 5-amino-1-(5-phospho-D-ribosyl)imidazole-4-carboxamide (10-formyl THF route): step 1/1. It participates in purine metabolism; IMP biosynthesis via de novo pathway; IMP from 5-formamido-1-(5-phospho-D-ribosyl)imidazole-4-carboxamide: step 1/1. The sequence is that of Bifunctional purine biosynthesis protein PurH from Bacillus cereus (strain G9842).